Consider the following 77-residue polypeptide: Exodeoxyribonuclease 7 small subunit (77 aa).

This sequence belongs to the XseB family. As to quaternary structure, heterooligomer composed of large and small subunits.

The protein resides in the cytoplasm. The enzyme catalyses Exonucleolytic cleavage in either 5'- to 3'- or 3'- to 5'-direction to yield nucleoside 5'-phosphates.. Its function is as follows. Bidirectionally degrades single-stranded DNA into large acid-insoluble oligonucleotides, which are then degraded further into small acid-soluble oligonucleotides. The polypeptide is Exodeoxyribonuclease 7 small subunit (Trichlorobacter lovleyi (strain ATCC BAA-1151 / DSM 17278 / SZ) (Geobacter lovleyi)).